We begin with the raw amino-acid sequence, 323 residues long: HPr kinase/phosphorylase (323 aa).

Catalysis depends on residues His146 and Lys167. 161-168 (GESGLGKS) contributes to the ATP binding site. Ser168 is a binding site for Mg(2+). Asp185 serves as the catalytic Proton acceptor; for phosphorylation activity. Proton donor; for dephosphorylation activity. The tract at residues 209–218 (LEVRGLGLLD) is important for the catalytic mechanism of both phosphorylation and dephosphorylation. Glu210 contacts Mg(2+). The active site involves Arg250. The interval 271–276 (QVAAGR) is important for the catalytic mechanism of dephosphorylation.

This sequence belongs to the HPrK/P family. As to quaternary structure, homohexamer. Requires Mg(2+) as cofactor.

The catalysed reaction is [HPr protein]-L-serine + ATP = [HPr protein]-O-phospho-L-serine + ADP + H(+). It carries out the reaction [HPr protein]-O-phospho-L-serine + phosphate + H(+) = [HPr protein]-L-serine + diphosphate. Its function is as follows. Catalyzes the ATP- as well as the pyrophosphate-dependent phosphorylation of a specific serine residue in HPr, a phosphocarrier protein of the phosphoenolpyruvate-dependent sugar phosphotransferase system (PTS). HprK/P also catalyzes the pyrophosphate-producing, inorganic phosphate-dependent dephosphorylation (phosphorolysis) of seryl-phosphorylated HPr (P-Ser-HPr). This chain is HPr kinase/phosphorylase, found in Cupriavidus necator (strain ATCC 17699 / DSM 428 / KCTC 22496 / NCIMB 10442 / H16 / Stanier 337) (Ralstonia eutropha).